The primary structure comprises 429 residues: Adenylosuccinate synthetase (429 aa).

Residues 12 to 18 (GDEGKGK) and 40 to 42 (GHT) contribute to the GTP site. The active-site Proton acceptor is the Asp13. Positions 13 and 40 each coordinate Mg(2+). IMP is bound by residues 13–16 (DEGK), 38–41 (NAGH), Thr128, Arg142, Gln223, Thr238, and Arg302. The Proton donor role is filled by His41. Position 298-304 (298-304 (VNTGRKR)) interacts with substrate. GTP is bound by residues Arg304, 330 to 332 (KLD), and 412 to 414 (GVG).

It belongs to the adenylosuccinate synthetase family. As to quaternary structure, homodimer. Mg(2+) is required as a cofactor.

It localises to the cytoplasm. The enzyme catalyses IMP + L-aspartate + GTP = N(6)-(1,2-dicarboxyethyl)-AMP + GDP + phosphate + 2 H(+). It functions in the pathway purine metabolism; AMP biosynthesis via de novo pathway; AMP from IMP: step 1/2. Its function is as follows. Plays an important role in the de novo pathway of purine nucleotide biosynthesis. Catalyzes the first committed step in the biosynthesis of AMP from IMP. This chain is Adenylosuccinate synthetase, found in Corynebacterium efficiens (strain DSM 44549 / YS-314 / AJ 12310 / JCM 11189 / NBRC 100395).